The sequence spans 144 residues: Large ribosomal subunit protein uL15 (144 aa).

Positions 1 to 57 are disordered; that stretch reads MRFNELQPAKGSRFAGKRLGRGIGSGLGKTSGKGHKGQKARSGGYHKVGFEGGQMPL. Over residues 21-31 the composition is skewed to gly residues; that stretch reads RGIGSGLGKTS.

This sequence belongs to the universal ribosomal protein uL15 family. Part of the 50S ribosomal subunit.

In terms of biological role, binds to the 23S rRNA. This chain is Large ribosomal subunit protein uL15, found in Dichelobacter nodosus (strain VCS1703A).